Here is a 317-residue protein sequence, read N- to C-terminus: Carbamate kinase (317 aa).

It belongs to the carbamate kinase family. As to quaternary structure, homodimer.

The catalysed reaction is hydrogencarbonate + NH4(+) + ATP = carbamoyl phosphate + ADP + H2O + H(+). It participates in metabolic intermediate metabolism; carbamoyl phosphate degradation; CO(2) and NH(3) from carbamoyl phosphate: step 1/1. The polypeptide is Carbamate kinase (CBK) (Giardia intestinalis (Giardia lamblia)).